The following is a 250-amino-acid chain: Ribonuclease 3 (250 aa).

Basic residues predominate over residues Met1–Lys15. The tract at residues Met1 to Ala21 is disordered. The 129-residue stretch at Asn22–Gly150 folds into the RNase III domain. Glu63 contributes to the Mg(2+) binding site. Residue Asp67 is part of the active site. Residues Asp136 and Glu139 each coordinate Mg(2+). Glu139 is a catalytic residue. Positions Asp175–Val244 constitute a DRBM domain.

Belongs to the ribonuclease III family. Homodimer. Mg(2+) serves as cofactor.

It localises to the cytoplasm. The catalysed reaction is Endonucleolytic cleavage to 5'-phosphomonoester.. In terms of biological role, digests double-stranded RNA. Involved in the processing of primary rRNA transcript to yield the immediate precursors to the large and small rRNAs (23S and 16S). Processes some mRNAs, and tRNAs when they are encoded in the rRNA operon. Processes pre-crRNA and tracrRNA of type II CRISPR loci if present in the organism. The protein is Ribonuclease 3 of Bradyrhizobium diazoefficiens (strain JCM 10833 / BCRC 13528 / IAM 13628 / NBRC 14792 / USDA 110).